The sequence spans 444 residues: Vacuolar protein sorting-associated protein 4B (444 aa).

An MIT domain is found at 4–82; the sequence is TSPNLQKAID…KEYLKNKEKK (79 aa). Residues 19-82 are a coiled coil; it reads AQEDKAGNYE…KEYLKNKEKK (64 aa). A compositionally biased stretch (basic and acidic residues) spans 78–88; sequence NKEKKAQKPVK. A disordered region spans residues 78–117; sequence NKEKKAQKPVKEGQPSPADEKGNDSDGEGESDDPEKKKLQ. Phosphoserine is present on residues Ser93, Ser102, and Ser108. 174-181 is an ATP binding site; sequence GPPGTGKS. A Phosphoserine modification is found at Ser410.

Belongs to the AAA ATPase family. Proposed to be monomeric or homodimeric in nucleotide-free form and to oligomerize upon binding to ATP to form two stacked hexameric or heptameric rings with a central pore through which ESCRT-III substrates are translocated in an ATP-dependent manner. In vitro, associates on the inside of a helical tubular structure formed by a CHMP2A-CHMP3 polymer. Interacts with CHMP1A, CHMP1B, CHMP2A, CHMP4B and CHMP6. Interacts with VPS4A; the interaction suggests a heteromeric assembly with VPS4A. Interacts with VTA1.

The protein localises to the late endosome membrane. It carries out the reaction ATP + H2O = ADP + phosphate + H(+). Its function is as follows. Involved in late steps of the endosomal multivesicular bodies (MVB) pathway. Recognizes membrane-associated ESCRT-III assemblies and catalyzes their disassembly, possibly in combination with membrane fission. Redistributes the ESCRT-III components to the cytoplasm for further rounds of MVB sorting. MVBs contain intraluminal vesicles (ILVs) that are generated by invagination and scission from the limiting membrane of the endosome and mostly are delivered to lysosomes enabling degradation of membrane proteins, such as stimulated growth factor receptors, lysosomal enzymes and lipids. VPS4A/B are required for the exosomal release of SDCBP, CD63 and syndecan. In terms of biological role, (Microbial infection) In conjunction with the ESCRT machinery also appears to function in topologically equivalent membrane fission events, such as the terminal stages of cytokinesis and enveloped virus budding (lentiviruses). The polypeptide is Vacuolar protein sorting-associated protein 4B (VPS4B) (Pongo abelii (Sumatran orangutan)).